We begin with the raw amino-acid sequence, 351 residues long: Cyanide hydratase (351 aa).

Positions 6–285 (YKAAAVTSEP…DGLLFVDIDL (280 aa)) constitute a CN hydrolase domain. The active-site Proton acceptor is glutamate 46. The active site involves lysine 128. Cysteine 163 serves as the catalytic Nucleophile.

It belongs to the carbon-nitrogen hydrolase superfamily. Nitrilase family. Oligomer of dimers, forming left-handed helical fibers with a diameter of 13 nm but with lengths ranging from approximately 1 um at the leading edge of the peak to having approximately the same length and diameter at the trailing edge.

It catalyses the reaction formamide = hydrogen cyanide + H2O. Its function is as follows. Catalyzes the hydration of cyanide to formamide. Degradation of cyanide may be important for plant pathogenic fungi in infection of cyanogenic plants. This is Cyanide hydratase from Neurospora crassa (strain ATCC 24698 / 74-OR23-1A / CBS 708.71 / DSM 1257 / FGSC 987).